The primary structure comprises 149 residues: Cytochrome c-555 (149 aa).

An N-terminal signal peptide occupies residues Met-1–Ala-20. Residues Met-32, Cys-137, Cys-140, and His-141 each coordinate heme c.

As to quaternary structure, monomer. Post-translationally, binds 1 heme c group covalently per subunit.

The protein resides in the periplasm. Low-spin monoheme cytochrome. This chain is Cytochrome c-555 (cycC), found in Bradyrhizobium diazoefficiens (strain JCM 10833 / BCRC 13528 / IAM 13628 / NBRC 14792 / USDA 110).